Reading from the N-terminus, the 713-residue chain is Pro-neuregulin-3, membrane-bound isoform (713 aa).

Residues 1-362 (MSEGAAGASP…MESEDVYQRQ (362 aa)) lie on the Extracellular side of the membrane. 3 disordered regions span residues 28–48 (AAAA…AAEP), 119–220 (SSFP…STQA), and 251–282 (AAAS…TTYS). Residues 34 to 44 (AGGGPDGGGEG) are compositionally biased toward gly residues. The segment covering 127–148 (TTTTTTSTTSPATPSAGGAASS) has biased composition (low complexity). Residues 149–163 (RTPNRISTRLTTITR) show a composition bias toward polar residues. Low complexity-rich tracts occupy residues 195–207 (STTA…STPG) and 254–274 (SSSS…STSP). Residues 288–331 (HFKPCRDKDLAYCLNDGECFVIETLTGSHKHCRCKEGYQGVRCD) form the EGF-like domain. 3 disulfides stabilise this stretch: C292–C306, C300–C319, and C321–C330. A helical membrane pass occupies residues 363-383 (VLSISCIIFGIVIVGMFCAAF). At 384-713 (YFKSKKQAKQ…EIQRDSVLTK (330 aa)) the chain is on the cytoplasmic side. The segment at 449–496 (SAPQSFPEVTSPDRGSQPIKHHSPGQRSGMLHRNTFRRAPPSPRSRLG) is disordered.

This sequence belongs to the neuregulin family. As to quaternary structure, interacts with ERBB4. In terms of processing, proteolytic cleavage close to the plasma membrane on the external face leads to the release of the soluble growth factor form. Post-translationally, extensive glycosylation precedes the proteolytic cleavage. Expressed in sympathetic, motor, and sensory neurons.

It is found in the cell membrane. The protein localises to the secreted. Its function is as follows. Direct ligand for the ERBB4 tyrosine kinase receptor. Binding results in ligand-stimulated tyrosine phosphorylation and activation of the receptor. Does not bind to the EGF receptor, ERBB2 or ERBB3 receptors. The sequence is that of Pro-neuregulin-3, membrane-bound isoform (Nrg3) from Mus musculus (Mouse).